We begin with the raw amino-acid sequence, 869 residues long: Rho GTPase-activating protein 27 (869 aa).

An SH3 domain is found at 6–69; that stretch reads EGDVYVLVEH…PAQYVRELPA (64 aa). The disordered stretch occupies residues 104–137; that stretch reads GADGSSAEPRGRASSLCGPARQRTSGQRNSLAPG. A phosphoserine mark is found at serine 155, serine 215, and serine 249. WW domains follow at residues 246–280 and 299–333; these read PRLS…SPFE and ESLE…DETE. 3 disordered regions span residues 275–299, 331–389, and 447–474; these read WESP…GSGE, ETEE…DLGP, and VPVP…PEEK. Positions 331–343 are enriched in acidic residues; sequence ETEELEDDPEEQL. Positions 345–356 are enriched in polar residues; that stretch reads MQPSLSPRSPGQ. Serine 350 carries the phosphoserine modification. The WW 3 domain occupies 414–447; the sequence is QFTQEQWVRLEDQEGKPYFYNPEDSSVQWELPQV. Phosphoserine occurs at positions 459 and 462. The residue at position 464 (threonine 464) is a Phosphothreonine. Serine 469 bears the Phosphoserine mark. In terms of domain architecture, PH spans 477-593; it reads TLDKAGVLHR…WHKAIAEGIE (117 aa). Residues 598-644 form a disordered region; sequence DLPQREEGEPSSADFGSSERLGSWKEEDVRPNAASPSLNPGSQESDL. Over residues 631-642 the composition is skewed to polar residues; sequence ASPSLNPGSQES. Residue serine 632 is modified to Phosphoserine. The Rho-GAP domain maps to 677–866; it reads CALAQLCERE…LILHQCADIF (190 aa).

Interacts with SH3KBP1/CIN85.

The protein resides in the cytoplasm. Its subcellular location is the membrane. Functionally, rho GTPase-activating protein which may be involved in clathrin-mediated endocytosis. GTPase activators for the Rho-type GTPases act by converting them to an inactive GDP-bound state. Has activity toward CDC42 and RAC1. This chain is Rho GTPase-activating protein 27 (Arhgap27), found in Rattus norvegicus (Rat).